Consider the following 387-residue polypeptide: Succinyl-diaminopimelate desuccinylase (387 aa).

His-75 is a Zn(2+) binding site. Residue Asp-77 is part of the active site. Residue Asp-108 coordinates Zn(2+). The active-site Proton acceptor is the Glu-139. Residues Glu-140, Glu-168, and His-357 each contribute to the Zn(2+) site.

This sequence belongs to the peptidase M20A family. DapE subfamily. In terms of assembly, homodimer. Zn(2+) serves as cofactor. Requires Co(2+) as cofactor.

It catalyses the reaction N-succinyl-(2S,6S)-2,6-diaminopimelate + H2O = (2S,6S)-2,6-diaminopimelate + succinate. Its pathway is amino-acid biosynthesis; L-lysine biosynthesis via DAP pathway; LL-2,6-diaminopimelate from (S)-tetrahydrodipicolinate (succinylase route): step 3/3. In terms of biological role, catalyzes the hydrolysis of N-succinyl-L,L-diaminopimelic acid (SDAP), forming succinate and LL-2,6-diaminopimelate (DAP), an intermediate involved in the bacterial biosynthesis of lysine and meso-diaminopimelic acid, an essential component of bacterial cell walls. This Caulobacter sp. (strain K31) protein is Succinyl-diaminopimelate desuccinylase.